Reading from the N-terminus, the 126-residue chain is Putative esterase ComA2 (126 aa).

The protein belongs to the thioesterase PaaI family.

Is not required for competence. In Bacillus subtilis (strain 168), this protein is Putative esterase ComA2 (yuxO).